The chain runs to 24 residues: Lactadherin (24 aa).

It localises to the membrane. Its subcellular location is the secreted. The protein resides in the cytoplasmic vesicle. The protein localises to the secretory vesicle. It is found in the acrosome membrane. Specific ligand for the alpha-v/beta-3 and alpha-v/beta-5 receptors. Also binds to phosphatidylserine-enriched cell surfaces in a receptor-independent manner. Zona pellucida-binding protein which may play a role in gamete interaction. Contributes to phagocytic removal of apoptotic cells in many tissues. Plays an important role in the maintenance of intestinal epithelial homeostasis and the promotion of mucosal healing. Promotes VEGF-dependent neovascularization. The protein is Lactadherin of Equus asinus (Donkey).